The primary structure comprises 384 residues: S-adenosylmethionine synthase (384 aa).

H15 lines the ATP pocket. D17 is a Mg(2+) binding site. E43 is a K(+) binding site. 2 residues coordinate L-methionine: E56 and Q99. The interval 99 to 109 (QSPDINQGVDR) is flexible loop. ATP contacts are provided by residues 164–166 (DAK), 230–231 (RF), D239, 245–246 (RK), A262, and K266. Residue D239 coordinates L-methionine. K270 is an L-methionine binding site.

It belongs to the AdoMet synthase family. As to quaternary structure, homotetramer; dimer of dimers. The cofactor is Mg(2+). K(+) serves as cofactor.

The protein localises to the cytoplasm. The catalysed reaction is L-methionine + ATP + H2O = S-adenosyl-L-methionine + phosphate + diphosphate. It participates in amino-acid biosynthesis; S-adenosyl-L-methionine biosynthesis; S-adenosyl-L-methionine from L-methionine: step 1/1. Functionally, catalyzes the formation of S-adenosylmethionine (AdoMet) from methionine and ATP. The overall synthetic reaction is composed of two sequential steps, AdoMet formation and the subsequent tripolyphosphate hydrolysis which occurs prior to release of AdoMet from the enzyme. The protein is S-adenosylmethionine synthase of Klebsiella pneumoniae subsp. pneumoniae (strain ATCC 700721 / MGH 78578).